Consider the following 509-residue polypeptide: RIFRLKKDIFRQQNFVYPLLLQEYIYSLAHYHSFNSLIFYEPVEIIGYDNKFSLVLVKRLITRMYQQKSLISSVNDSNQNEFWGHKNSFSSHFSSQMVSEGFGVILEIPFSSRLVSSLEEKRIPKSQNLRSIHSIFPFLEDKLLHLNYVSDLLIPHPIHLEILVQILQCWIKDVPSLHLLRLFFHEYHNLNSLITSKKSIYVFSKRKKRFFWFLHNSYVYECEYIFLFLRKQSSYLRSISSGVFLERTHFYGKIEYLTVVCCNSFQRILWFLKDTFIHYVRYQGKAILASKGTLILIKKWKFHLVNFWQSYFHFWFQPYRIHIKQLPNYSFSFLGYFSSVLKNPLIVRNQMLENSFLINTLTTKLDTIAPVISIIGSLSKAQFCTVLGHPISKPIWTNLSDSDILDQFCRICRNLCRYHSGSSNKQVLYRIKYILRLSCARTLARKHKSTVRTFMRRLGSGFLEEFFLEEEQSLSLIFLQKIPFPLHGLHRERIWYLDIIRINDLVDHS.

The protein belongs to the intron maturase 2 family. MatK subfamily.

It is found in the plastid. Its subcellular location is the chloroplast. Its function is as follows. Usually encoded in the trnK tRNA gene intron. Probably assists in splicing its own and other chloroplast group II introns. This is Maturase K from Arpophyllum giganteum (Hyacinth orchid).